We begin with the raw amino-acid sequence, 296 residues long: METIQSVITEWSDSKSWDHLFQHNFKDSNWSELFDPVNFKFKFGTTPFSQFQILPSVISLYLVIIFSIKFLMRNRKPFSLKYVSILHNAILCIWSLVMCVGILYEVIKRITAEGPLFTVCETVSGFDKGPAYYWSYIFYISKFYELLDTVIIVLKKKPLIFLHVYHHCIVVWLCWYFMYSGWNLQLWVVFLNTFVHVFMYYFYFQTGRGKTVWWKKYITMIQIIQFICLGIAGLLHSAAINLNSSPCFTHYPAFISAYLINFSFLFLFSQFFVKSYSNKPTSSSSTTTPTKTKKID.

A run of 7 helical transmembrane segments spans residues phenylalanine 51–leucine 71, valine 83–leucine 103, tryptophan 134–leucine 154, leucine 159–tyrosine 179, leucine 184–phenylalanine 204, methionine 220–isoleucine 240, and alanine 253–valine 273. A compositionally biased stretch (low complexity) spans serine 277–threonine 290. The tract at residues serine 277–aspartate 296 is disordered.

Belongs to the ELO family.

Its subcellular location is the membrane. The enzyme catalyses a very-long-chain acyl-CoA + malonyl-CoA + H(+) = a very-long-chain 3-oxoacyl-CoA + CO2 + CoA. In terms of biological role, could be implicated in synthesis of very long chain fatty acids. The polypeptide is Putative fatty acid elongase DDB_G0272012 (Dictyostelium discoideum (Social amoeba)).